The sequence spans 425 residues: Dihydroorotase (425 aa).

Residues His61 and His63 each contribute to the Zn(2+) site. Substrate contacts are provided by residues 63–65 (HLR) and Asn95. Zn(2+) contacts are provided by Asp153, His180, and His233. Asn279 contributes to the substrate binding site. Asp306 contributes to the Zn(2+) binding site. Asp306 is an active-site residue. His310 lines the substrate pocket.

Belongs to the metallo-dependent hydrolases superfamily. DHOase family. Class I DHOase subfamily. The cofactor is Zn(2+).

The catalysed reaction is (S)-dihydroorotate + H2O = N-carbamoyl-L-aspartate + H(+). Its pathway is pyrimidine metabolism; UMP biosynthesis via de novo pathway; (S)-dihydroorotate from bicarbonate: step 3/3. Its function is as follows. Catalyzes the reversible cyclization of carbamoyl aspartate to dihydroorotate. The chain is Dihydroorotase from Geobacter sulfurreducens (strain ATCC 51573 / DSM 12127 / PCA).